The primary structure comprises 514 residues: Glutamate--cysteine ligase (514 aa).

Belongs to the glutamate--cysteine ligase type 1 family. Type 1 subfamily.

It catalyses the reaction L-cysteine + L-glutamate + ATP = gamma-L-glutamyl-L-cysteine + ADP + phosphate + H(+). Its pathway is sulfur metabolism; glutathione biosynthesis; glutathione from L-cysteine and L-glutamate: step 1/2. The chain is Glutamate--cysteine ligase from Enterobacter sp. (strain 638).